The primary structure comprises 229 residues: Potassium/proton antiporter CemA (229 aa).

3 helical membrane-spanning segments follow: residues 7–27 (FTPLFYLASIVFLPWWISFSV), 107–127 (ILHFSTNIICFIILSGYSILG), and 189–209 (IISGLVSTFPVILDTIFKYWI).

It belongs to the CemA family.

The protein resides in the plastid. It is found in the chloroplast inner membrane. The catalysed reaction is K(+)(in) + H(+)(out) = K(+)(out) + H(+)(in). Functionally, contributes to K(+)/H(+) antiport activity by supporting proton efflux to control proton extrusion and homeostasis in chloroplasts in a light-dependent manner to modulate photosynthesis. Prevents excessive induction of non-photochemical quenching (NPQ) under continuous-light conditions. Indirectly promotes efficient inorganic carbon uptake into chloroplasts. This is Potassium/proton antiporter CemA from Nicotiana sylvestris (Wood tobacco).